Here is a 689-residue protein sequence, read N- to C-terminus: Methionine--tRNA ligase (689 aa).

Positions 15-25 (PYANGPVHIGH) match the 'HIGH' region motif. Zn(2+)-binding residues include Cys147, Cys150, Cys160, and Cys163. A 'KMSKS' region motif is present at residues 342–346 (KISTS). Residue Thr345 participates in ATP binding. The tRNA-binding domain maps to 588-689 (DFAKMDIRVA…AVVNAGSMIG (102 aa)).

This sequence belongs to the class-I aminoacyl-tRNA synthetase family. MetG type 1 subfamily. In terms of assembly, homodimer. Zn(2+) is required as a cofactor.

The protein resides in the cytoplasm. It catalyses the reaction tRNA(Met) + L-methionine + ATP = L-methionyl-tRNA(Met) + AMP + diphosphate. Is required not only for elongation of protein synthesis but also for the initiation of all mRNA translation through initiator tRNA(fMet) aminoacylation. This Cytophaga hutchinsonii (strain ATCC 33406 / DSM 1761 / CIP 103989 / NBRC 15051 / NCIMB 9469 / D465) protein is Methionine--tRNA ligase.